The sequence spans 82 residues: MNRLMILVFAAVFLALASADEDVDIAKRGVPCLCVSDGPRPRGNNLSGIMWMKTGGYGGNGCPKGWHFCGKSRGFFSDCCKR.

Positions 1-19 (MNRLMILVFAAVFLALASA) are cleaved as a signal peptide. Positions 20–26 (DEDVDIA) are excised as a propeptide. Cystine bridges form between Cys32/Cys79, Cys34/Cys69, and Cys62/Cys80.

The protein belongs to the sea anemone sodium channel inhibitory toxin family. Type I subfamily.

The protein localises to the secreted. Its subcellular location is the nematocyst. Its function is as follows. Binds specifically to voltage-gated sodium channels (Nav), thereby delaying their inactivation during signal transduction. Causes death to crabs. This is Delta-actitoxin-Aeq2b 2 from Actinia equina (Beadlet anemone).